A 146-amino-acid chain; its full sequence is Aminoglycoside N(6')-acetyltransferase type 1 (146 aa).

The region spanning 1 to 146 (MIVICDHDNL…RVVFYRKTLG (146 aa)) is the N-acetyltransferase domain. Substrate-binding residues include Trp21, Tyr66, Glu79, and Asp115. Asn120 serves as a coordination point for acetyl-CoA. Glu136 is a substrate binding site.

In terms of assembly, homodimer.

It carries out the reaction kanamycin B + acetyl-CoA = N(6')-acetylkanamycin B + CoA + H(+). Functionally, catalyzes the transfer of an acetyl group from acetyl-CoA to the 6'-amino group of aminoglycoside molecules conferring resistance to antibiotics containing the purpurosamine ring including amikacin, tobramycin, netilmicin, isepamicin and sisomicin. The chain is Aminoglycoside N(6')-acetyltransferase type 1 from Serratia marcescens.